Reading from the N-terminus, the 533-residue chain is Chromosomal replication initiator protein DnaA (533 aa).

The interval 1–72 (MNDFWQHCSA…DLARDFWNAP (72 aa)) is domain I, interacts with DnaA modulators. The domain II stretch occupies residues 72–196 (PIEVQFVLDP…EAADSMYERS (125 aa)). A disordered region spans residues 83–113 (AGQRSPAGATPLAPRAPLPSANPAPVAPGPA). The span at 96-110 (PRAPLPSANPAPVAP) shows a compositional bias: pro residues. The tract at residues 197–413 (KLNPVLTFDN…GALRKILAYS (217 aa)) is domain III, AAA+ region. Gly241, Gly243, Lys244, and Thr245 together coordinate ATP. Positions 414-533 (KFHGREITIE…LHVLEQTLKG (120 aa)) are domain IV, binds dsDNA.

Belongs to the DnaA family. As to quaternary structure, oligomerizes as a right-handed, spiral filament on DNA at oriC.

The protein localises to the cytoplasm. Plays an essential role in the initiation and regulation of chromosomal replication. ATP-DnaA binds to the origin of replication (oriC) to initiate formation of the DNA replication initiation complex once per cell cycle. Binds the DnaA box (a 9 base pair repeat at the origin) and separates the double-stranded (ds)DNA. Forms a right-handed helical filament on oriC DNA; dsDNA binds to the exterior of the filament while single-stranded (ss)DNA is stabiized in the filament's interior. The ATP-DnaA-oriC complex binds and stabilizes one strand of the AT-rich DNA unwinding element (DUE), permitting loading of DNA polymerase. After initiation quickly degrades to an ADP-DnaA complex that is not apt for DNA replication. Binds acidic phospholipids. The sequence is that of Chromosomal replication initiator protein DnaA from Burkholderia mallei (strain SAVP1).